A 153-amino-acid chain; its full sequence is Small ribosomal subunit protein uS15 (153 aa).

It belongs to the universal ribosomal protein uS15 family. As to quaternary structure, part of the 30S ribosomal subunit.

This Sulfolobus acidocaldarius (strain ATCC 33909 / DSM 639 / JCM 8929 / NBRC 15157 / NCIMB 11770) protein is Small ribosomal subunit protein uS15.